A 329-amino-acid chain; its full sequence is GTP 3',8-cyclase (329 aa).

The Radical SAM core domain occupies 8–234 (VFARKFYYLR…QLRQRSDGPA (227 aa)). Arg-17 contacts GTP. [4Fe-4S] cluster contacts are provided by Cys-24 and Cys-28. Tyr-30 contacts S-adenosyl-L-methionine. Cys-31 is a [4Fe-4S] cluster binding site. Position 68 (Arg-68) interacts with GTP. Gly-72 contacts S-adenosyl-L-methionine. Residue Thr-99 participates in GTP binding. Ser-123 contacts S-adenosyl-L-methionine. Residue Lys-160 coordinates GTP. Met-194 serves as a coordination point for S-adenosyl-L-methionine. Positions 257 and 260 each coordinate [4Fe-4S] cluster. 262 to 264 (RLR) lines the GTP pocket. Cys-274 lines the [4Fe-4S] cluster pocket.

This sequence belongs to the radical SAM superfamily. MoaA family. Monomer and homodimer. [4Fe-4S] cluster serves as cofactor.

It catalyses the reaction GTP + AH2 + S-adenosyl-L-methionine = (8S)-3',8-cyclo-7,8-dihydroguanosine 5'-triphosphate + 5'-deoxyadenosine + L-methionine + A + H(+). It functions in the pathway cofactor biosynthesis; molybdopterin biosynthesis. Functionally, catalyzes the cyclization of GTP to (8S)-3',8-cyclo-7,8-dihydroguanosine 5'-triphosphate. In Shigella flexneri, this protein is GTP 3',8-cyclase.